The primary structure comprises 250 residues: HTH-type transcriptional regulator SarS (250 aa).

2 consecutive DNA-binding regions (H-T-H motif) follow at residues 53–76 and 177–200; these read FKKIVSDLCYKQSDLVQHIKVLVK and LKDLIETIHHKYPQTVRALNNLKK.

This sequence belongs to the SarA family.

Its subcellular location is the cytoplasm. Its function is as follows. Transcriptional regulator that controls expression of some virulence factors in a cell density-dependent manner. This chain is HTH-type transcriptional regulator SarS (sarS), found in Staphylococcus aureus (strain MRSA252).